Here is a 474-residue protein sequence, read N- to C-terminus: MFS transporter SAT21 (474 aa).

The next 6 membrane-spanning stretches (helical) occupy residues 7-27 (LVLPFILYLLFRLSHFLLEVP), 64-84 (LVVGWKMTFDSIPGLMSILYF), 101-121 (CVGYLLAILWVLITCLFHQVF), 131-151 (LFLFIGGGQLVFAAVITAFVA), 162-182 (FLFLLAAMPHMDKVASPALAT), and 189-209 (LFLPSLVSMAIVVICVALLQM). A disordered region spans residues 220–252 (KVVGSTSDQTEPFLRSSSNSSQESGTAAPAIDP). Positions 222–244 (VGSTSDQTEPFLRSSSNSSQESG) are enriched in polar residues. Asn238 is a glycosylation site (N-linked (GlcNAc...) asparagine). A run of 6 helical transmembrane segments spans residues 276–296 (FICYLCFFLKSNAMASEAFIF), 315–335 (LALSSGAVISTLIICPLANAT), 346–366 (INIGAVHASSIVLVASFIMAW), 374–394 (FIFSMLAAGFGEGLEPALQGV), 406–426 (SIFALMCTCSLLGDMTGGPLM), and 445–465 (FLASALVFGAVIVLAHLLWAL).

It belongs to the major facilitator superfamily.

The protein resides in the cell membrane. Its function is as follows. MFS transporter; part of the satratoxin SC3 cluster involved in the biosynthesis of satratoxins, trichothecene mycotoxins that are associated with human food poisonings. Satratoxins are suggested to be made by products of multiple gene clusters (SC1, SC2 and SC3) that encode 21 proteins in all, including polyketide synthases, acetyltransferases, and other enzymes expected to modify the trichothecene skeleton. SC1 encodes 10 proteins, SAT1 to SAT10. The largest are SAT8, which encodes a putative polyketide synthase (PKS) with a conventional non-reducing architecture, and SAT10, a putative protein containing four ankyrin repeats and thus may be involved in protein scaffolding. The putative short-chain reductase SAT3 may assist the PKS in some capacity. SAT6 contains a secretory lipase domain and acts probably as a trichothecene esterase. SAT5 encodes a putative acetyltransferase, and so, with SAT6, may affect endogenous protection from toxicity. The probable transcription factor SAT9 may regulate the expression of the SC1 cluster. SC2 encodes proteins SAT11 to SAT16, the largest of which encodes the putative reducing PKS SAT13. SAT11 is a cytochrome P450 monooxygenase, while SAT14 and SAT16 are probable acetyltransferases. The SC2 cluster may be regulated by the transcription factor SAT15. SC3 is a small cluster that encodes 5 proteins, SAT17 to SAT21. SAT21 is a putative MFS-type transporter which may have a role in exporting secondary metabolites. The four other proteins putatively encoded in SC3 include the taurine hydroxylase-like protein SAT17, the O-methyltransferase SAT18, the acetyltransferase SAT19, and the Cys6-type zinc finger SAT20, the latter being probably involved in regulation of SC3 expression. The protein is MFS transporter SAT21 of Stachybotrys chartarum (strain CBS 109288 / IBT 7711) (Toxic black mold).